The sequence spans 102 residues: ATP-dependent Clp protease adapter protein ClpS (102 aa).

It belongs to the ClpS family. In terms of assembly, binds to the N-terminal domain of the chaperone ClpA.

Functionally, involved in the modulation of the specificity of the ClpAP-mediated ATP-dependent protein degradation. The protein is ATP-dependent Clp protease adapter protein ClpS of Shewanella denitrificans (strain OS217 / ATCC BAA-1090 / DSM 15013).